We begin with the raw amino-acid sequence, 512 residues long: UDP-N-acetylmuramate--L-alanine ligase (512 aa).

Position 132–138 (132–138 (GAHGKTT)) interacts with ATP.

This sequence belongs to the MurCDEF family.

The protein resides in the cytoplasm. The catalysed reaction is UDP-N-acetyl-alpha-D-muramate + L-alanine + ATP = UDP-N-acetyl-alpha-D-muramoyl-L-alanine + ADP + phosphate + H(+). Its pathway is cell wall biogenesis; peptidoglycan biosynthesis. Functionally, cell wall formation. The sequence is that of UDP-N-acetylmuramate--L-alanine ligase from Bifidobacterium longum (strain NCC 2705).